A 245-amino-acid chain; its full sequence is Probable GTP-binding protein EngB (245 aa).

An EngB-type G domain is found at 46 to 223 (DVPEIAFVGR…AQHLWDWAHP (178 aa)). GTP-binding positions include 54-61 (GRSNAGKS), 81-85 (GRTQS), 103-106 (DLPG), 173-176 (TKSD), and 202-204 (FSS). Mg(2+)-binding residues include Ser-61 and Thr-83. The segment at 219 to 245 (DWAHPPEKPAKKPKAEPAAEAATGDEG) is disordered. The span at 222–235 (HPPEKPAKKPKAEP) shows a compositional bias: basic and acidic residues. A compositionally biased stretch (low complexity) spans 236-245 (AAEAATGDEG).

This sequence belongs to the TRAFAC class TrmE-Era-EngA-EngB-Septin-like GTPase superfamily. EngB GTPase family. Mg(2+) is required as a cofactor.

Its function is as follows. Necessary for normal cell division and for the maintenance of normal septation. The polypeptide is Probable GTP-binding protein EngB (Polaromonas sp. (strain JS666 / ATCC BAA-500)).